Consider the following 199-residue polypeptide: Thymidine kinase (199 aa).

Residues 15–22 (GSMFSGKS) and 88–91 (DEIQ) contribute to the ATP site. The active-site Proton acceptor is the glutamate 89. Residues cysteine 145, cysteine 148, cysteine 183, and histidine 186 each contribute to the Zn(2+) site.

This sequence belongs to the thymidine kinase family. Homotetramer.

The protein localises to the cytoplasm. The catalysed reaction is thymidine + ATP = dTMP + ADP + H(+). The chain is Thymidine kinase from Staphylococcus haemolyticus (strain JCSC1435).